A 336-amino-acid polypeptide reads, in one-letter code: Vacuolar protein sorting-associated protein 26B (336 aa).

A phosphoserine mark is found at Ser-302, Ser-304, and Ser-319.

It belongs to the VPS26 family. Component of the heterotrimeric retromer cargo-selective complex (CSC), also described as vacuolar protein sorting subcomplex (VPS), formed by VPS26 (VPS26A or VPS26B), VPS29 and VPS35. The CSC has a highly elongated structure with VPS26 and VPS29 binding independently at opposite distal ends of VPS35 as central platform. The CSC is believed to associate with variable sorting nexins to form functionally distinct retromer complex variants. The originally described SNX-BAR retromer is a pentamer containing the CSC and a heterodimeric membrane-deforming subcomplex formed between SNX1 or SNX2 and SNX5 or SNX6 (also called SNX-BAR subcomplex); the respective CSC and SNX-BAR subcomplexes associate with low affinity. The CSC associates with SNX3 to form a SNX3-retromer complex. The CSC associates with SNX27, the WASH complex and the SNX-BAR subcomplex to form the SNX27-retromer complex. Interacts with VPS29, VPS35, TBC1D5, GOLPH3, SNX27.

It localises to the cytoplasm. The protein localises to the membrane. It is found in the early endosome. The protein resides in the late endosome. Its function is as follows. Acts as a component of the retromer cargo-selective complex (CSC). The CSC is believed to be the core functional component of retromer or respective retromer complex variants acting to prevent missorting of selected transmembrane cargo proteins into the lysosomal degradation pathway. The recruitment of the CSC to the endosomal membrane involves RAB7A and SNX3. The SNX-BAR retromer mediates retrograde transport of cargo proteins from endosomes to the trans-Golgi network (TGN) and is involved in endosome-to-plasma membrane transport for cargo protein recycling. The SNX3-retromer mediates the retrograde transport of WLS distinct from the SNX-BAR retromer pathway. The SNX27-retromer is believed to be involved in endosome-to-plasma membrane trafficking and recycling of a broad spectrum of cargo proteins. The CSC seems to act as recruitment hub for other proteins, such as the WASH complex and TBC1D5. May be involved in retrograde transport of SORT1 but not of IGF2R. Acts redundantly with VSP26A in SNX-27 mediated endocytic recycling of SLC2A1/GLUT1. The chain is Vacuolar protein sorting-associated protein 26B (VPS26B) from Pongo abelii (Sumatran orangutan).